The sequence spans 410 residues: MAPNALSPVDIENMNDAAIEQVRLQVSDVIDPRYDTKWNMLRWLQSNDFNIPKTVHLLKKHLKWRKDRKLDEPESQSLLQFSDARRKHAPIDIIGPQRKEDGDRLVVVDRAGRIDVSGLMKSVQPTEYLHEMFRSFEEIQRRLMKMEAETGVQCYMHYIFDLEALNFDPTLLGVVNGPFRVSWQLVGQHYREFIDKFIVINSPSYINVLWSALSPFIPEQSKQRIVFAGSNWKEELLDIVDKECLPERYGGMIPDIQCLKPVDPIPKSLYWKLPAQYPTMDQLHKVSVSASKHRMLIYKVDKPDTELLMYSHNENDITITLYYSKNKNVSENDLELAVAPIPKCGLPAMDLFDYNCEYPGYYYIKLANEASWLLPSTYRIIVIEKESGKELEPLNLNEKWIKKGQKSKKK.

The 177-residue stretch at 81 to 257 (FSDARRKHAP…RYGGMIPDIQ (177 aa)) folds into the CRAL-TRIO domain.

The chain is CRAL-TRIO domain-containing protein F28H7.8 from Caenorhabditis elegans.